Here is a 406-residue protein sequence, read N- to C-terminus: Tryptophan synthase beta chain (406 aa).

Position 99 is an N6-(pyridoxal phosphate)lysine (Lys99).

This sequence belongs to the TrpB family. As to quaternary structure, tetramer of two alpha and two beta chains. Pyridoxal 5'-phosphate serves as cofactor.

It carries out the reaction (1S,2R)-1-C-(indol-3-yl)glycerol 3-phosphate + L-serine = D-glyceraldehyde 3-phosphate + L-tryptophan + H2O. Its pathway is amino-acid biosynthesis; L-tryptophan biosynthesis; L-tryptophan from chorismate: step 5/5. Its function is as follows. The beta subunit is responsible for the synthesis of L-tryptophan from indole and L-serine. The polypeptide is Tryptophan synthase beta chain (Rhizobium leguminosarum bv. trifolii (strain WSM2304)).